The sequence spans 66 residues: Phylloseptin-H5 (66 aa).

An N-terminal signal peptide occupies residues Met1–Cys22. Positions Glu23–Glu44 are excised as a propeptide. A disordered region spans residues Glu24–Glu44. Acidic residues predominate over residues Glu30–Lys41. Phe65 carries the post-translational modification Phenylalanine amide.

As to expression, expressed by the skin glands.

Its subcellular location is the secreted. In terms of biological role, has antibacterial activity against the Gram-negative bacteria E.coli and P.aeruginosa, and the Gram-positive bacterium S.aureus. No hemolytic activity. The chain is Phylloseptin-H5 (psn7) from Pithecopus hypochondrialis (Orange-legged leaf frog).